The primary structure comprises 2696 residues: MSYSMVNASSAVSSPETAKNSDEPPPISSEAVNVLFPSVDPNSKLFRNSLNITISREAPPLTTSRIDFLSLFIFCKLTHWLSLNPSSHRDEEEEEASPFYPFTIVLTYQPGPGQSPWKEMASPLESLLSISGSVSTSSTLIRLRIFRHDIPEILQNSDMTSDIAPVIVDMIFQTLAIYDDRASRKAVDDLIVKGLGNVTFMKTFAAMLVQVMEKQLKFCFDTVCYRLLIWSCLLLEKSQFATVSKNAFVRVASTQASLLRIIMESSFRMRRACKRFMFHLFSQSQAIYSLYMDEVKGSRIPYKDSPELLGLLLEFSCSSPALFEQSKAIFVDIYVKDVLNSREKQKPNLSNCFKPLLQRLSHEEFQTVILPAAVKMLKRNPEIVLESVGFLLANVNIDLSKYALELLPVILPQARHTDEDRRLGALSMVMCLSEKSSNPDTIEAMFASVKAIIGGSEGRLQSPHQRIGMLNAVQELASAPEGKYIGSLSRTICSFLIACYKDEGNEDVKLSILSAVASWASRSSVAIQPNLVSFIAAGLKEKEALRRGHLRCVRIICRNPDTISQISDLLSPLIQLVKTGFTKAVQRLDGIYALLIVSKIAACDIKAEDTMVKEKLWTLISQNEPSLVQITLASKLSSDDCVVCVDLLEVLLVEHSSRVLEAFSLKSLSQLLLFLLCHPSWNVRKTAYNSVTKIFLATSQLATTLLDEFSDFLSITGDQIVSSRTSDADNPADHQAPFVPSVEVLVKALIVISSAAVAGPPSSWIVRAIFCSHHPSIVGTGKRDAVWKRLQKCLKTCGFDVATFLSTNGESVCKSLLGPMGLTSAKTPEQQAAVYSLSTMMSLAPEDTFTVFKMHLQDLPDRLSHDMLSETDIKIFHTPEGMLLSEQGVYVAQTIGAKYTKQEPSSNHSLKKGLASRETANSGRRDTAKLTKKADKGKTAKEEARELMLKEEASTRENVHRIQKSLSLVLHALGEMGLANPVFCHSQLPFLATFLDPLLRSPIVSAAAFENLVKLARCTVQPLCNWALEISTALRLIAIDEVDTSFDFRPSVDKAGKTYEGLFERIVNGLSISCKSGPLPVDTFTFIFPVLYHVLGVVPAYQASVGPALNELCLGLQADDVANALYGVYSKDVHVRLACLNAVKCIPAVSKCSLPQNVKIATNIWIALHDPEKSVAESADDLWARYGHDLGTDYSGIFKALSHINLNVRLAAAEALADALHESPSSIQLSLSTLFSLYIRDATSGEDVFDAGWIGRQGIALALQSAADVLTTKDLPAVMTFLISRALADPNTDVRGKMINAGIMIIDKHGKENVSLLFPIFENYLNKEASDEEEYDLVREGVVIFTGALAKHLARDDPKVHNVVEKLLEVLNTPSESVQRAVSTCLSPLVLSKQEEAPALFLRLLDKLMKSDKYGERRGAAFGLAGVVMGFGISSLKKYGLIVTLQEALIDRNSAKRREGALLAFECLCEKLGKLFEPYVIKMLPLLLVSFSDQVGAVREAAECAARAMMSQLSAYGVKLVLPSLLKGLEDKAWRTKQSSVQLLGAMAFCAPQQLSQCLPRVVPKLTEVFKTIQVLTDTHPKVQSAGQLALQQVGSVIKNPEISSLVPTLLLALTDPNEYTRHALDTLLQTTFVNSVDAPSLALLVPIVHRGLRERSSETKKKASQIVGNMCSLVTEPKDMIPYIGLLLPEVKKVLVDPIPEVRSVAARAVGSLIRGMGEDNFPDLVPWLFETLKSDTSNVERYGAAQGLSEVIAALGTDYFENILPDLIRHCSHQKASVRDGYLTLFKFLPRSLGAQFQKYLQLVLPAILDGLADENESVRDAALGAGHVLVEHHATTSLPLLLPAVEDGIFNDNWRIRQSSVELLGDLLFKVAGTSGKALLEGGSDDEGASTEAQGRAIIDILGMDKRNEVLAALYMVRTDVSLSVRQAALHVWKTIVANTPKTLKEIMPILMSTLISSLASPSSERRQVAGRSLGELVRKLGERVLPLIIPILSKGLKDPDVDKRQGVCIGLNEVMASAGRSQLLSFMDQLIPTIRTALCDSALEVRESAGLAFSTLYKSAGLQAMDEIIPTLLEALEDDEMSTTALDGLKQIISVRTAAVLPHILPKLVHLPLSALNAHALGALAEVAGAGFNTHLGTILPALLSAMGGENKEVQELAQEAAERVVLVIDEEGVETLLSELLKGVSDSQASIRRSSAYLIGYFFKSSKLYLIDEAPNMISTLIVMLSDSDSTTVAVSWEALARVIGSVPKEVLPSYIKLVRDAVSTARDKERRKRKGGYVVIPGLCLPKSLKPLLPVFLQGLISGSAELREQAAIGLGELIEVTSEQALKEFVIPITGPLIRIIGDRFPWQVKSAILATLIILIQRGGMALKPFLPQLQTTFVKCLQDSTRTIRSSAAVALGKLSALSTRIDPLVGDLMTSFQAADSGVREAILSAMRGVIKHAGKSIGPAVRVRIFDLLKDLMHHEDDQVRISATSMLGVLSQYLEAAQLSVLLQEVNDLSASQNWGARHGSVLCISSLLKHNPSTIMTSSLFSSMLNSLKSSLKDEKFPLRESSTKALGRLLLKQLATDPSNTKVVIDVLSSIVSALHDDSSEVRRRALSSLKAFAKDNPSATMANISVIGPPLAECLKDGNTPVRLAAERCALHVFQLTKGAENVQAAQKYITGLDARRLSKFPEQSDDSESDDDNVSG.

The segment covering 1–18 (MSYSMVNASSAVSSPETA) has biased composition (polar residues). Residues 1–26 (MSYSMVNASSAVSSPETAKNSDEPPP) are disordered. HEAT repeat units follow at residues 162 to 204 (DIAP…MKTF), 253 to 290 (STQA…IYSL), 303 to 340 (KDSP…DVLN), 364 to 400 (EFQT…IDLS), 401 to 438 (KYAL…KSSN), 487 to 525 (SLSR…RSSV), 526 to 562 (AIQP…NPDT), 564 to 601 (SQIS…SKIA), and 642 to 677 (VVCV…FLLC). The interval 901 to 941 (KQEPSSNHSLKKGLASRETANSGRRDTAKLTKKADKGKTAK) is disordered. Residues 923–941 (GRRDTAKLTKKADKGKTAK) show a composition bias toward basic and acidic residues. HEAT repeat units follow at residues 985–1021 (HSQL…CTVQ), 1082–1118 (DTFT…GLQA), 1188–1225 (HDLG…ESPS), 1273–1311 (KDLP…KHGK), 1315–1355 (SLLF…HLAR), 1358–1395 (PKVH…SKQE), 1397–1433 (APAL…GFGI), 1436–1474 (LKKY…KLGK), 1478–1515 (PYVI…QLSA), 1516–1553 (YGVK…CAPQ), 1564–1600 (PKLT…VIKN), 1601–1638 (PEIS…NSVD), 1640–1677 (PSLA…LVTE), 1683–1720 (PYIG…GMGE), 1722–1759 (NFPD…ALGT), 1761–1797 (YFEN…SLGA), 1801–1838 (KYLQ…HHAT), and 1840–1876 (SLPL…KVAG). Ser-1887 is modified (phosphoserine). HEAT repeat units follow at residues 1908 to 1945 (DKRN…NTPK), 1949 to 1986 (EIMP…KLGE), 1988 to 2024 (VLPL…SAGR), 2029 to 2066 (SFMD…SAGL), 2067 to 2102 (QAMD…VRTA), 2104 to 2137 (VLPH…AGFN), 2138 to 2175 (THLG…VIDE), 2177 to 2213 (GVET…SSKL), 2217 to 2254 (DEAP…SVPK), 2258 to 2292 (PSYI…LCLP), 2293 to 2330 (KSLK…VTSE), 2335 to 2373 (EFVI…RGGM), 2377 to 2414 (PFLP…LSTR), 2416 to 2450 (DPLV…HAGK), 2455 to 2492 (AVRV…YLEA), 2494 to 2530 (QLSV…HNPS), 2536 to 2573 (SLFS…KQLA), 2580 to 2617 (KVVI…DNPS), and 2620 to 2658 (MANI…LTKG).

It belongs to the GCN1 family.

Functionally, involved in immunity against bacterial infection and in non-host resistance. Required for embryo development. Required for systemic acquired resistance, but functions in an salicylic acid-independent manner. Required for bacterium-triggered stomatal closure response. In Arabidopsis thaliana (Mouse-ear cress), this protein is Protein ILITYHIA.